The following is a 129-amino-acid chain: Small ribosomal subunit protein uS11 (129 aa).

It belongs to the universal ribosomal protein uS11 family. Part of the 30S ribosomal subunit. Interacts with proteins S7 and S18. Binds to IF-3.

In terms of biological role, located on the platform of the 30S subunit, it bridges several disparate RNA helices of the 16S rRNA. Forms part of the Shine-Dalgarno cleft in the 70S ribosome. This chain is Small ribosomal subunit protein uS11, found in Methylobacterium sp. (strain 4-46).